We begin with the raw amino-acid sequence, 259 residues long: MSELKVAALRALKLMDLTTLNDNDTDAKVIQLCHDAKSPVGNTAAICIYPRFIPIAKKTLREQGTPEIRIATVTNFPHGNDDIEIAVAETKAAVAYGADEVDVVFPYRALIAGNEQVGFDLVKQCKAACGDKVLLKVIIETGELKQEALIKKASQICIEAGADFIKTSTGKVPVNATPEYARMMLEVIRDMGVAKTVGFKPAGGVRTAEDAQQYLAMADEILGGDWADSRHYRFGASSLLTNLLNTLEVTDQKADPAAY.

Asp-102 (proton donor/acceptor) is an active-site residue. Catalysis depends on Lys-166, which acts as the Schiff-base intermediate with acetaldehyde. The active-site Proton donor/acceptor is Lys-200.

This sequence belongs to the DeoC/FbaB aldolase family. DeoC type 2 subfamily.

It is found in the cytoplasm. It catalyses the reaction 2-deoxy-D-ribose 5-phosphate = D-glyceraldehyde 3-phosphate + acetaldehyde. It functions in the pathway carbohydrate degradation; 2-deoxy-D-ribose 1-phosphate degradation; D-glyceraldehyde 3-phosphate and acetaldehyde from 2-deoxy-alpha-D-ribose 1-phosphate: step 2/2. Functionally, catalyzes a reversible aldol reaction between acetaldehyde and D-glyceraldehyde 3-phosphate to generate 2-deoxy-D-ribose 5-phosphate. The sequence is that of Deoxyribose-phosphate aldolase from Vibrio cholerae serotype O1 (strain ATCC 39315 / El Tor Inaba N16961).